Consider the following 396-residue polypeptide: MAKAKFERNKPHCNIGTIGHVDHGKTTLTAAITKVLAEQGGAEFTDYANIDKAPEERERGITISTAHVEYETANRHYAHVDCPGHADYVKNMITGAAQMDGAILVVNAADGPMPQTREHILLARQVGVPALVVYMNKVDQVDDEEILELVELEVRELLSSYDFPGDDIPIVKGSALAALEGRDDNIGKDSINALMAAVDAYIPQPPRPTDKPFLMPVEDVFSISGRGTVVTGRIETGIIKVGEEVEIIGLKDTQKTTVTGVEMFRKLLDQGEAGDNIGALIRGIKREEVERGQVLAKPGSVTPHTEFSAEVYVLSKDEGGRHTPFFANYRPQFYFRTTDVTGEVVLPEGTEMVMPGDNVTLAVKLIAPIAMDEGLRFAIREGGRTVGSGVVSKITK.

Residues 10–207 (KPHCNIGTIG…VDAYIPQPPR (198 aa)) form the tr-type G domain. The interval 19-26 (GHVDHGKT) is G1. Residue 19–26 (GHVDHGKT) participates in GTP binding. Mg(2+) is bound at residue threonine 26. The segment at 60–64 (GITIS) is G2. The segment at 81-84 (DCPG) is G3. Residues 81–85 (DCPGH) and 136–139 (NKVD) contribute to the GTP site. Residues 136–139 (NKVD) form a G4 region. The tract at residues 174–176 (SAL) is G5.

This sequence belongs to the TRAFAC class translation factor GTPase superfamily. Classic translation factor GTPase family. EF-Tu/EF-1A subfamily. Monomer.

Its subcellular location is the cytoplasm. The enzyme catalyses GTP + H2O = GDP + phosphate + H(+). In terms of biological role, GTP hydrolase that promotes the GTP-dependent binding of aminoacyl-tRNA to the A-site of ribosomes during protein biosynthesis. The chain is Elongation factor Tu from Novosphingobium aromaticivorans (strain ATCC 700278 / DSM 12444 / CCUG 56034 / CIP 105152 / NBRC 16084 / F199).